The following is a 331-amino-acid chain: 6-phosphogluconolactonase (331 aa).

This sequence belongs to the cycloisomerase 2 family.

The catalysed reaction is 6-phospho-D-glucono-1,5-lactone + H2O = 6-phospho-D-gluconate + H(+). The protein operates within carbohydrate degradation; pentose phosphate pathway; D-ribulose 5-phosphate from D-glucose 6-phosphate (oxidative stage): step 2/3. In terms of biological role, catalyzes the hydrolysis of 6-phosphogluconolactone to 6-phosphogluconate. The chain is 6-phosphogluconolactonase from Enterobacter sp. (strain 638).